The chain runs to 83 residues: Antitoxin ChpS (83 aa).

Positions 3–48 (ITIKRWGNSAGMVIPNIVMKELNLQPGQSVEAQVSNNQLILTPISR) constitute a SpoVT-AbrB domain.

Belongs to the PemI family. In terms of assembly, interacts with ChpB, inhibiting its endoribonuclease activity.

In terms of biological role, antitoxin component of a type II toxin-antitoxin (TA) system. May be involved in the regulation of cell growth. It acts as a suppressor of the endoribonuclease (inhibitory function) of ChpB protein. Both ChpS and ChpB probably bind to the promoter region of the chpS-chpB operon to autoregulate their synthesis. The protein is Antitoxin ChpS (chpS) of Escherichia coli (strain K12).